Consider the following 109-residue polypeptide: Nucleoid-associated protein Sputw3181_1707 (109 aa).

This sequence belongs to the YbaB/EbfC family. Homodimer.

The protein localises to the cytoplasm. The protein resides in the nucleoid. Binds to DNA and alters its conformation. May be involved in regulation of gene expression, nucleoid organization and DNA protection. The protein is Nucleoid-associated protein Sputw3181_1707 of Shewanella sp. (strain W3-18-1).